Here is a 481-residue protein sequence, read N- to C-terminus: 7-deoxyloganetin glucosyltransferase (481 aa).

His22 functions as the Proton acceptor in the catalytic mechanism. His22 is a binding site for an anthocyanidin. Asp126 acts as the Charge relay in catalysis. Residues Thr148, Gln363, His378, Trp381, Asn382, Ser383, and Glu386 each contribute to the UDP-alpha-D-glucose site. Ala401 provides a ligand contact to an anthocyanidin. Positions 402 and 403 each coordinate UDP-alpha-D-glucose.

The protein belongs to the UDP-glycosyltransferase family. Ubiquitous. Very low expression in stems.

The catalysed reaction is 7-deoxyloganetin + UDP-alpha-D-glucose = 7-deoxyloganin + UDP + H(+). In terms of biological role, iridoid glucosyltransferase acting on genipin and 7-deoxyloganetin. No activity with 7-deoxyloganetic acid. Involved in geniposide biosynthesis. This chain is 7-deoxyloganetin glucosyltransferase (UGT85A24), found in Gardenia jasminoides (Cape jasmine).